The primary structure comprises 143 residues: UPF0201 protein PAE1632 (143 aa).

The protein belongs to the UPF0201 family.

This chain is UPF0201 protein PAE1632, found in Pyrobaculum aerophilum (strain ATCC 51768 / DSM 7523 / JCM 9630 / CIP 104966 / NBRC 100827 / IM2).